Reading from the N-terminus, the 154-residue chain is Myoglobin (154 aa).

The Globin domain occupies 2-148 (GLSDQEWQQV…FRNDMASKYK (147 aa)). Residue histidine 65 participates in nitrite binding. Histidine 65 contributes to the O2 binding site. Histidine 94 is a heme b binding site.

Monomeric.

It is found in the cytoplasm. It localises to the sarcoplasm. The enzyme catalyses Fe(III)-heme b-[protein] + nitric oxide + H2O = Fe(II)-heme b-[protein] + nitrite + 2 H(+). It carries out the reaction H2O2 + AH2 = A + 2 H2O. Its function is as follows. Monomeric heme protein which primary function is to store oxygen and facilitate its diffusion within muscle tissues. Reversibly binds oxygen through a pentacoordinated heme iron and enables its timely and efficient release as needed during periods of heightened demand. Depending on the oxidative conditions of tissues and cells, and in addition to its ability to bind oxygen, it also has a nitrite reductase activity whereby it regulates the production of bioactive nitric oxide. Under stress conditions, like hypoxia and anoxia, it also protects cells against reactive oxygen species thanks to its pseudoperoxidase activity. The sequence is that of Myoglobin (MB) from Struthio camelus (Common ostrich).